Consider the following 326-residue polypeptide: Phospho-N-acetylmuramoyl-pentapeptide-transferase (326 aa).

9 helical membrane-spanning segments follow: residues 3-23, 51-71, 79-99, 115-135, 138-158, 169-189, 195-215, 221-243, and 306-326; these read ISIS…PAFI, TMGG…VALF, VGMI…DDFL, LALQ…GGDM, VFGY…FWLV, GIDG…GVIA, MDIL…FVFN, VFMG…MALH, and FFFW…LYLM.

This sequence belongs to the glycosyltransferase 4 family. MraY subfamily. Mg(2+) serves as cofactor.

It localises to the cell membrane. It carries out the reaction UDP-N-acetyl-alpha-D-muramoyl-L-alanyl-gamma-D-glutamyl-L-lysyl-D-alanyl-D-alanine + di-trans,octa-cis-undecaprenyl phosphate = Mur2Ac(oyl-L-Ala-gamma-D-Glu-L-Lys-D-Ala-D-Ala)-di-trans,octa-cis-undecaprenyl diphosphate + UMP. Its pathway is cell wall biogenesis; peptidoglycan biosynthesis. Its function is as follows. Catalyzes the initial step of the lipid cycle reactions in the biosynthesis of the cell wall peptidoglycan: transfers peptidoglycan precursor phospho-MurNAc-pentapeptide from UDP-MurNAc-pentapeptide onto the lipid carrier undecaprenyl phosphate, yielding undecaprenyl-pyrophosphoryl-MurNAc-pentapeptide, known as lipid I. This is Phospho-N-acetylmuramoyl-pentapeptide-transferase from Streptococcus pneumoniae (strain Taiwan19F-14).